The following is a 217-amino-acid chain: uncharacterized protein (217 aa).

This is an uncharacterized protein from Homo sapiens (Human).